An 879-amino-acid chain; its full sequence is Alanine--tRNA ligase (879 aa).

Residues histidine 566, histidine 570, cysteine 668, and histidine 672 each contribute to the Zn(2+) site.

Belongs to the class-II aminoacyl-tRNA synthetase family. The cofactor is Zn(2+).

Its subcellular location is the cytoplasm. The catalysed reaction is tRNA(Ala) + L-alanine + ATP = L-alanyl-tRNA(Ala) + AMP + diphosphate. In terms of biological role, catalyzes the attachment of alanine to tRNA(Ala) in a two-step reaction: alanine is first activated by ATP to form Ala-AMP and then transferred to the acceptor end of tRNA(Ala). Also edits incorrectly charged Ser-tRNA(Ala) and Gly-tRNA(Ala) via its editing domain. The sequence is that of Alanine--tRNA ligase from Clostridium beijerinckii (strain ATCC 51743 / NCIMB 8052) (Clostridium acetobutylicum).